The primary structure comprises 245 residues: tRNA (guanine-N(1)-)-methyltransferase (245 aa).

Residues G111 and 131–136 (IGDYVL) each bind S-adenosyl-L-methionine.

Belongs to the RNA methyltransferase TrmD family. As to quaternary structure, homodimer.

It localises to the cytoplasm. It carries out the reaction guanosine(37) in tRNA + S-adenosyl-L-methionine = N(1)-methylguanosine(37) in tRNA + S-adenosyl-L-homocysteine + H(+). Specifically methylates guanosine-37 in various tRNAs. This Staphylococcus carnosus (strain TM300) protein is tRNA (guanine-N(1)-)-methyltransferase.